The chain runs to 413 residues: Serine hydroxymethyltransferase (413 aa).

Residues Leu-117 and 121-123 (GHL) contribute to the (6S)-5,6,7,8-tetrahydrofolate site. N6-(pyridoxal phosphate)lysine is present on Lys-226. (6S)-5,6,7,8-tetrahydrofolate is bound by residues Glu-239 and 349 to 351 (SPF).

Belongs to the SHMT family. In terms of assembly, homodimer. Requires pyridoxal 5'-phosphate as cofactor.

It is found in the cytoplasm. It catalyses the reaction (6R)-5,10-methylene-5,6,7,8-tetrahydrofolate + glycine + H2O = (6S)-5,6,7,8-tetrahydrofolate + L-serine. Its pathway is one-carbon metabolism; tetrahydrofolate interconversion. It participates in amino-acid biosynthesis; glycine biosynthesis; glycine from L-serine: step 1/1. In terms of biological role, catalyzes the reversible interconversion of serine and glycine with tetrahydrofolate (THF) serving as the one-carbon carrier. This reaction serves as the major source of one-carbon groups required for the biosynthesis of purines, thymidylate, methionine, and other important biomolecules. Also exhibits THF-independent aldolase activity toward beta-hydroxyamino acids, producing glycine and aldehydes, via a retro-aldol mechanism. The protein is Serine hydroxymethyltransferase of Bacillus cereus (strain ATCC 10987 / NRS 248).